The chain runs to 285 residues: Putative sugar uptake protein lmo0169 (285 aa).

10 consecutive transmembrane segments (helical) span residues 5–24 (IALIPAVMWGIMPLVVSKIG), 31–48 (IIGTTFGALAFAIGVFIF), 53–71 (YTATIIIASFVSGAFWSLG), 84–106 (VSKTMPLSTGMQLVGTSLFGVFA), 116–135 (LVLGFSALALIIIGIFLTSY), 151–173 (IITLLISSVGYVGYVVITRWFDI), 178–195 (AILPQAIGMVVAGLLFSI), 207–226 (WLNMIPGVMWATGNLALLFS), 232–254 (IATGFSLSQMGVVISTIGGILFL), and 263–282 (LILVIIGVVLVIIGGTMIGI).

Belongs to the GRP transporter (TC 2.A.7.5) family.

It localises to the cell membrane. This is Putative sugar uptake protein lmo0169 from Listeria monocytogenes serovar 1/2a (strain ATCC BAA-679 / EGD-e).